Consider the following 422-residue polypeptide: Histidinol dehydrogenase (422 aa).

Tyr-123, Gln-183, and Asn-206 together coordinate NAD(+). Residues Ser-229, Gln-251, and His-254 each contribute to the substrate site. Residues Gln-251 and His-254 each contribute to the Zn(2+) site. Residues Glu-320 and His-321 each act as proton acceptor in the active site. 4 residues coordinate substrate: His-321, Asp-354, Glu-408, and His-413. Zn(2+) is bound at residue Asp-354. Residue His-413 coordinates Zn(2+).

It belongs to the histidinol dehydrogenase family. Requires Zn(2+) as cofactor.

The enzyme catalyses L-histidinol + 2 NAD(+) + H2O = L-histidine + 2 NADH + 3 H(+). It functions in the pathway amino-acid biosynthesis; L-histidine biosynthesis; L-histidine from 5-phospho-alpha-D-ribose 1-diphosphate: step 9/9. In terms of biological role, catalyzes the sequential NAD-dependent oxidations of L-histidinol to L-histidinaldehyde and then to L-histidine. The protein is Histidinol dehydrogenase of Haloarcula marismortui (strain ATCC 43049 / DSM 3752 / JCM 8966 / VKM B-1809) (Halobacterium marismortui).